The following is a 286-amino-acid chain: Plasma membrane ascorbate-dependent reductase CYBRD1 (286 aa).

Over 1–7 (MAMEGYW) the chain is Cytoplasmic. A helical transmembrane segment spans residues 8-32 (RFLALLGSALLVGFLSVIFALVWVL). The Cytochrome b561 domain occupies 15–220 (SALLVGFLSV…FGALIFWIVT (206 aa)). Topologically, residues 33–47 (HYREGLGWDGSALEF) are extracellular. Residues 48-69 (NWHPVLMVTGFVFIQGIAIIVY) form a helical membrane-spanning segment. Heme b-binding residues include His50, Arg70, and Lys79. The Cytoplasmic portion of the chain corresponds to 70-78 (RLPWTWKCS). L-ascorbate contacts are provided by Lys79 and Lys83. Residues 79-105 (KLLMKSIHAGLNAVAAILAIISVVAVF) traverse the membrane as a helical segment. A heme b-binding site is contributed by His86. The Extracellular segment spans residues 106-118 (ENHNVNNIANMYS). Position 108 (His108) interacts with Fe(3+). Residues 115 to 118 (NMYS) and His120 each bind heme b. A helical membrane pass occupies residues 119-144 (LHSWVGLIAVICYLLQLLSGFSVFLL). Residues 145-151 (PWAPLSL) are Cytoplasmic-facing. L-ascorbate is bound at residue Arg152. A helical transmembrane segment spans residues 152–179 (RAFLMPIHVYSGIVIFGTVIATALMGLT). 2 residues coordinate heme b: His159 and Glu180. Topologically, residues 180-197 (EKLIFSLRDPAYSTFPPE) are extracellular. The chain crosses the membrane as a helical span at residues 198 to 222 (GVFVNTLGLLILVFGALIFWIVTRP). The Cytoplasmic segment spans residues 223–286 (QWKRPKEPNS…LDEAGQRSTM (64 aa)). Lys225 is a binding site for heme b. The segment at 229–268 (EPNSTILHPNGGTEQGARGSMPAYSGNNMDKSDSELNSEV) is disordered. The residue at position 232 (Ser232) is a Phosphoserine. Thr285 carries the phosphothreonine modification.

In terms of assembly, homodimer. The cofactor is heme b. In terms of tissue distribution, present in erythrocyte membranes (at protein level). Also expressed in respiratory epithelium.

It localises to the cell membrane. The protein localises to the apical cell membrane. The catalysed reaction is Fe(3+)(out) + L-ascorbate(in) = monodehydro-L-ascorbate radical(in) + Fe(2+)(out) + H(+). It carries out the reaction Cu(2+)(out) + L-ascorbate(in) = Cu(+)(out) + monodehydro-L-ascorbate radical(in) + H(+). The enzyme catalyses monodehydro-L-ascorbate radical(out) + L-ascorbate(in) = monodehydro-L-ascorbate radical(in) + L-ascorbate(out). With respect to regulation, activated by chelators like citrate, malate, and oxalate specially at alkaline pH. In terms of biological role, plasma membrane reductase that uses cytoplasmic ascorbate as an electron donor to reduce extracellular Fe(3+) into Fe(2+). Probably functions in dietary iron absorption at the brush border of duodenal enterocytes by producing Fe(2+), the divalent form of iron that can be transported into enterocytes. It is also able to reduce extracellular monodehydro-L-ascorbate and may be involved in extracellular ascorbate regeneration by erythrocytes in blood. May also act as a ferrireductase in airway epithelial cells. May also function as a cupric transmembrane reductase. This chain is Plasma membrane ascorbate-dependent reductase CYBRD1, found in Homo sapiens (Human).